Reading from the N-terminus, the 46-residue chain is Iota-conotoxin-like r11b (46 aa).

Residues Pro-2 and Pro-11 each carry the 4-hydroxyproline modification. 4 disulfide bridges follow: Cys-5–Cys-19, Cys-12–Cys-22, Cys-18–Cys-27, and Cys-21–Cys-38. Pro-29 is modified (4-hydroxyproline). At Phe-44 the chain carries D-phenylalanine.

In terms of processing, the natural D-Phe form of the peptide is more potent than the synthetic L-Phe form. As to expression, expressed by the venom duct.

It localises to the secreted. Functionally, iota-conotoxins bind to voltage-gated sodium channels (Nav) and act as agonists by shifting the voltage-dependence of activation to more hyperpolarized levels. Produces excitatory symptoms when injected intracranially into mice and is lethal at higher doses. Exposure to frog cutaneous pectoris induces spontaneous and repetitive action potentials. This effect is slowly reversible. Natural peptide (with D-Phe) is active on nerve, but not on muscle. Synthetic peptide (with L-Phe) is not active on both nerve and muscle. The chain is Iota-conotoxin-like r11b from Conus radiatus (Rayed cone).